The sequence spans 114 residues: PDZK1-interacting protein 1 (114 aa).

Residues Met1–Gln28 lie on the Extracellular side of the membrane. Residues Pro29–Asn51 traverse the membrane as a helical segment. Residues His52–Met114 lie on the Cytoplasmic side of the membrane. Phosphoserine is present on Ser85. Residues Ser92–Met114 form a disordered region. Residues Glu105 to Met114 are compositionally biased toward basic and acidic residues.

The protein belongs to the PDZK1-interacting protein 1/SMIM24 family. In terms of assembly, forms a heterodimer (via N-terminal transmembrane helix) with SLC5A2/SGLT2 (via TM13); this interaction enhances SLC5A2 transporter activity. Interacts with PDZK1.

The protein resides in the apical cell membrane. Functionally, auxiliary protein of electrogenic Na(+)-coupled sugar symporter SLC5A2/SGLT2 and SLC5A1/SGLT1. Essential for the transporter activity of SLC5A2/SGLT2 but not SLC5A1/SGLT1. The sequence is that of PDZK1-interacting protein 1 from Sus scrofa (Pig).